The chain runs to 357 residues: MRPARALIDLQALRHNYRLARELTGAKALAVVKADAYGHGAVRCALALETEADGFAVACIEEALELRAAGIKAPVLLLEGFFEASELALIAEHDLWCVVHSLWQLEAIEQTPVRKPLTIWLKMDTGMHRVGVHPKDYQDAYQRLLASGKVSRIVLMSHFARADELDAAATEQQVAVFEAARQGLSAECSLRNSPAVLGWPSIKSDWVRPGIMLYGATPFEVAQAEAARLQPVMTLQSRIISVRELPAGEPVGYGAKFISPRPTRVGVVAMGYADGYPRQAPTGTPVVVAGKRTQLIGRVSMDMLCVDLTEVPEATVGSPVELWGKQVLASDVAMQAGTIPYQIFCNLKRVPLDCIGE.

K33 functions as the Proton acceptor; specific for D-alanine in the catalytic mechanism. Position 33 is an N6-(pyridoxal phosphate)lysine (K33). R129 lines the substrate pocket. The Proton acceptor; specific for L-alanine role is filled by Y253. M301 lines the substrate pocket.

This sequence belongs to the alanine racemase family. The cofactor is pyridoxal 5'-phosphate.

The enzyme catalyses L-alanine = D-alanine. It participates in amino-acid biosynthesis; D-alanine biosynthesis; D-alanine from L-alanine: step 1/1. Its function is as follows. Catalyzes the interconversion of L-alanine and D-alanine. May also act on other amino acids. The polypeptide is Alanine racemase (alr) (Pseudomonas entomophila (strain L48)).